Reading from the N-terminus, the 193-residue chain is Imidazoleglycerol-phosphate dehydratase (193 aa).

It belongs to the imidazoleglycerol-phosphate dehydratase family.

The protein resides in the cytoplasm. The catalysed reaction is D-erythro-1-(imidazol-4-yl)glycerol 3-phosphate = 3-(imidazol-4-yl)-2-oxopropyl phosphate + H2O. Its pathway is amino-acid biosynthesis; L-histidine biosynthesis; L-histidine from 5-phospho-alpha-D-ribose 1-diphosphate: step 6/9. In Methanospirillum hungatei JF-1 (strain ATCC 27890 / DSM 864 / NBRC 100397 / JF-1), this protein is Imidazoleglycerol-phosphate dehydratase.